Reading from the N-terminus, the 409-residue chain is WW domain-containing oxidoreductase (409 aa).

Positions Met1–Asp23 are disordered. 2 WW domains span residues Asp11 to Thr44 and Gly52 to Leu86. NADP(+) is bound at residue Gly128 to Gly134. Ser257 lines the substrate pocket. The active-site Proton acceptor is the Tyr288.

The protein belongs to the short-chain dehydrogenases/reductases (SDR) family.

Its subcellular location is the cytoplasm. The protein resides in the mitochondrion. It localises to the golgi apparatus. It is found in the lysosome. Functionally, putative oxidoreductase. May control genotoxic stress-induced cell death. May play a role in TGFB1 signaling and TGFB1-mediated cell death. May also play a role in tumor necrosis factor (TNF)-mediated cell death. May play a role in Wnt signaling. The polypeptide is WW domain-containing oxidoreductase (Wwox) (Drosophila melanogaster (Fruit fly)).